Consider the following 273-residue polypeptide: 2-dehydro-3-deoxyphosphooctonate aldolase (273 aa).

This sequence belongs to the KdsA family.

It is found in the cytoplasm. It catalyses the reaction D-arabinose 5-phosphate + phosphoenolpyruvate + H2O = 3-deoxy-alpha-D-manno-2-octulosonate-8-phosphate + phosphate. It participates in carbohydrate biosynthesis; 3-deoxy-D-manno-octulosonate biosynthesis; 3-deoxy-D-manno-octulosonate from D-ribulose 5-phosphate: step 2/3. It functions in the pathway bacterial outer membrane biogenesis; lipopolysaccharide biosynthesis. The polypeptide is 2-dehydro-3-deoxyphosphooctonate aldolase (Geobacter sp. (strain M21)).